The chain runs to 360 residues: Epoxyqueuosine reductase (360 aa).

Catalysis depends on Asp142, which acts as the Proton donor. The 4Fe-4S ferredoxin-type domain maps to 187–216 (APTEPVTAHCGSCQACMDVCPTQAIVAPHR). Cys196, Cys199, Cys202, Cys206, Cys222, Cys249, Cys252, and Cys256 together coordinate [4Fe-4S] cluster.

This sequence belongs to the QueG family. In terms of assembly, monomer. Cob(II)alamin is required as a cofactor. Requires [4Fe-4S] cluster as cofactor.

It is found in the cytoplasm. The enzyme catalyses epoxyqueuosine(34) in tRNA + AH2 = queuosine(34) in tRNA + A + H2O. It functions in the pathway tRNA modification; tRNA-queuosine biosynthesis. Its function is as follows. Catalyzes the conversion of epoxyqueuosine (oQ) to queuosine (Q), which is a hypermodified base found in the wobble positions of tRNA(Asp), tRNA(Asn), tRNA(His) and tRNA(Tyr). The polypeptide is Epoxyqueuosine reductase (Alicycliphilus denitrificans (strain DSM 14773 / CIP 107495 / K601)).